We begin with the raw amino-acid sequence, 349 residues long: DNA fragmentation factor subunit beta (349 aa).

In terms of domain architecture, CIDE-N spans 7 to 83; it reads QPKCVKLRAL…LLTAGETWHG (77 aa). The interval 319-349 is disordered; sequence RSRIYRPQTGSRRKQPPRKQPPRKRPPRKRQ. Residues 329–349 show a composition bias toward basic residues; sequence SRRKQPPRKQPPRKRPPRKRQ.

In terms of assembly, heterodimer of DFFA and DFFB. Interacts with H1-1.

The protein localises to the cytoplasm. Its subcellular location is the nucleus. Its activity is regulated as follows. Inhibited by DFFA (DFF45). Functionally, nuclease that induces DNA fragmentation and chromatin condensation during apoptosis. Degrades naked DNA and induces apoptotic morphology. This Rattus norvegicus (Rat) protein is DNA fragmentation factor subunit beta (Dffb).